We begin with the raw amino-acid sequence, 204 residues long: Small ribosomal subunit protein uS7 (204 aa).

N-acetylmethionine is present on methionine 1. N-acetylthreonine; in 40S ribosomal protein S5, N-terminally processed is present on threonine 2. Residue threonine 14 is modified to Phosphothreonine. An N6-acetyllysine; alternate modification is found at lysine 47. Lysine 47 is covalently cross-linked (Glycyl lysine isopeptide (Lys-Gly) (interchain with G-Cter in SUMO2); alternate). Serine 142 bears the Phosphoserine mark.

It belongs to the universal ribosomal protein uS7 family. As to quaternary structure, component of the small ribosomal subunit. Part of the small subunit (SSU) processome, composed of more than 70 proteins and the RNA chaperone small nucleolar RNA (snoRNA) U3.

Its subcellular location is the cytoplasm. The protein resides in the nucleus. It localises to the nucleolus. In terms of biological role, component of the small ribosomal subunit. The ribosome is a large ribonucleoprotein complex responsible for the synthesis of proteins in the cell. Part of the small subunit (SSU) processome, first precursor of the small eukaryotic ribosomal subunit. During the assembly of the SSU processome in the nucleolus, many ribosome biogenesis factors, an RNA chaperone and ribosomal proteins associate with the nascent pre-rRNA and work in concert to generate RNA folding, modifications, rearrangements and cleavage as well as targeted degradation of pre-ribosomal RNA by the RNA exosome. The polypeptide is Small ribosomal subunit protein uS7 (Rps5) (Rattus norvegicus (Rat)).